The sequence spans 239 residues: MGHKVHPIGIRLGISADWNSKWYANKAEFAGYLAADLKVRQVLRKKMSQAGISKILIERPSNTACVSMHVARPGVVIGKRGEDIEMLRKQVSDIMGVSVHINVIEVRKPELDAQLVAESVAQQLERRIMFRRAMKRSVGNAMRLGALGIKISVAGRLNGAEIARSEWYREGRVPLQTLRADIGYGFSEAHTNYGVTGVKVLIYHGDIFSFSSVGQEKQDDISRGDRNADRSSRRSREVR.

Residues 39-107 (VRQVLRKKMS…SVHINVIEVR (69 aa)) form the KH type-2 domain. The interval 217–239 (KQDDISRGDRNADRSSRRSREVR) is disordered.

It belongs to the universal ribosomal protein uS3 family. As to quaternary structure, part of the 30S ribosomal subunit. Forms a tight complex with proteins S10 and S14.

Binds the lower part of the 30S subunit head. Binds mRNA in the 70S ribosome, positioning it for translation. This Xylella fastidiosa (strain 9a5c) protein is Small ribosomal subunit protein uS3.